The primary structure comprises 112 residues: uncharacterized protein (112 aa).

A helical membrane pass occupies residues Ile-75 to Phe-95.

It is found in the membrane. This is an uncharacterized protein from Methanocaldococcus jannaschii (strain ATCC 43067 / DSM 2661 / JAL-1 / JCM 10045 / NBRC 100440) (Methanococcus jannaschii).